The chain runs to 269 residues: MAKEGGLGENSRWSLGGMTALVTGGSKGIGEAVVEELAMLGAKVHTCARDETQLQERLREWQAKGFQVTTSVCDVSSRDQRVKLMETVSSLYQGKLNILVNNVGTSIFKPTTEYTAEDFSFVMATNLESAFHLSQLAHPLLKASGSGSIVLISSAAGVVHVNVGSIYGATKGAMNQLARNLACEWASDNIRTNSVCPWYITTPLSNDFFDEEFKKEAVRTTPMGRVGEANEVSPLVAFLCLPSASYITGQTICVDGGATVNGFSFKTMP.

21-45 (LVTGGSKGIGEAVVEELAMLGAKVH) lines the NADP(+) pocket. A substrate-binding site is contributed by S154. The active-site Proton acceptor is the Y167.

It belongs to the short-chain dehydrogenases/reductases (SDR) family. SDR65C subfamily.

Unspecific reductase providing both diastereomeric alcohols from the prochiral ketones. Active on cyclic monoterpenes and small flexible lipophilic carbonyls. No activity with tropinone, nitrogen-containing tropinone analogs, tropine or pseudotropine as substrate. In Arabidopsis thaliana (Mouse-ear cress), this protein is Senescence-associated protein 13.